Here is an 87-residue protein sequence, read N- to C-terminus: UPF0729 protein C18orf32 homolog (87 aa).

It belongs to the UPF0729 family.

This is UPF0729 protein C18orf32 homolog from Esox lucius (Northern pike).